We begin with the raw amino-acid sequence, 356 residues long: UDP-N-acetylglucosamine--N-acetylmuramyl-(pentapeptide) pyrophosphoryl-undecaprenol N-acetylglucosamine transferase (356 aa).

UDP-N-acetyl-alpha-D-glucosamine is bound by residues 11 to 13 (TGG), N122, S186, and Q287.

Belongs to the glycosyltransferase 28 family. MurG subfamily.

It localises to the cell inner membrane. It catalyses the reaction di-trans,octa-cis-undecaprenyl diphospho-N-acetyl-alpha-D-muramoyl-L-alanyl-D-glutamyl-meso-2,6-diaminopimeloyl-D-alanyl-D-alanine + UDP-N-acetyl-alpha-D-glucosamine = di-trans,octa-cis-undecaprenyl diphospho-[N-acetyl-alpha-D-glucosaminyl-(1-&gt;4)]-N-acetyl-alpha-D-muramoyl-L-alanyl-D-glutamyl-meso-2,6-diaminopimeloyl-D-alanyl-D-alanine + UDP + H(+). It functions in the pathway cell wall biogenesis; peptidoglycan biosynthesis. Functionally, cell wall formation. Catalyzes the transfer of a GlcNAc subunit on undecaprenyl-pyrophosphoryl-MurNAc-pentapeptide (lipid intermediate I) to form undecaprenyl-pyrophosphoryl-MurNAc-(pentapeptide)GlcNAc (lipid intermediate II). This is UDP-N-acetylglucosamine--N-acetylmuramyl-(pentapeptide) pyrophosphoryl-undecaprenol N-acetylglucosamine transferase from Anaplasma marginale (strain St. Maries).